Consider the following 481-residue polypeptide: Xylulose kinase (481 aa).

A substrate-binding site is contributed by 81 to 82 (QH). D239 acts as the Proton acceptor in catalysis.

Belongs to the FGGY kinase family.

The catalysed reaction is D-xylulose + ATP = D-xylulose 5-phosphate + ADP + H(+). Its function is as follows. Catalyzes the phosphorylation of D-xylulose to D-xylulose 5-phosphate. The polypeptide is Xylulose kinase (Streptomyces rubiginosus).